A 102-amino-acid chain; its full sequence is UPF0122 protein MPN_424 (102 aa).

Belongs to the UPF0122 family.

Might take part in the signal recognition particle (SRP) pathway. This is inferred from the conservation of its genetic proximity to ftsY/ffh. May be a regulatory protein. The polypeptide is UPF0122 protein MPN_424 (Mycoplasma pneumoniae (strain ATCC 29342 / M129 / Subtype 1) (Mycoplasmoides pneumoniae)).